A 330-amino-acid polypeptide reads, in one-letter code: Lipoyl synthase (330 aa).

The [4Fe-4S] cluster site is built by C55, C60, C66, C81, C85, C88, and S292. In terms of domain architecture, Radical SAM core spans 67–281 (WEDREATFLI…AEEAREIGFV (215 aa)).

It belongs to the radical SAM superfamily. Lipoyl synthase family. [4Fe-4S] cluster is required as a cofactor.

It is found in the cytoplasm. It catalyses the reaction [[Fe-S] cluster scaffold protein carrying a second [4Fe-4S](2+) cluster] + N(6)-octanoyl-L-lysyl-[protein] + 2 oxidized [2Fe-2S]-[ferredoxin] + 2 S-adenosyl-L-methionine + 4 H(+) = [[Fe-S] cluster scaffold protein] + N(6)-[(R)-dihydrolipoyl]-L-lysyl-[protein] + 4 Fe(3+) + 2 hydrogen sulfide + 2 5'-deoxyadenosine + 2 L-methionine + 2 reduced [2Fe-2S]-[ferredoxin]. It functions in the pathway protein modification; protein lipoylation via endogenous pathway; protein N(6)-(lipoyl)lysine from octanoyl-[acyl-carrier-protein]: step 2/2. In terms of biological role, catalyzes the radical-mediated insertion of two sulfur atoms into the C-6 and C-8 positions of the octanoyl moiety bound to the lipoyl domains of lipoate-dependent enzymes, thereby converting the octanoylated domains into lipoylated derivatives. This is Lipoyl synthase from Cutibacterium acnes (strain DSM 16379 / KPA171202) (Propionibacterium acnes).